A 305-amino-acid polypeptide reads, in one-letter code: Phospho-N-acetylmuramoyl-pentapeptide-transferase (305 aa).

The next 9 helical transmembrane spans lie at 1–21 (MLMV…RASK), 46–66 (AGGV…YLSG), 73–93 (ELLI…DDWL), 113–133 (FPLQ…LASH), 139–159 (LGPV…VNAF), 174–194 (IIVL…VAVL), 207–227 (VFMG…AYIL), 233–253 (LLPI…IQVI), and 282–302 (VTIR…WLLG).

The protein belongs to the glycosyltransferase 4 family. MraY subfamily. Mg(2+) serves as cofactor.

The protein localises to the cell membrane. It carries out the reaction UDP-N-acetyl-alpha-D-muramoyl-L-alanyl-gamma-D-glutamyl-meso-2,6-diaminopimeloyl-D-alanyl-D-alanine + di-trans,octa-cis-undecaprenyl phosphate = di-trans,octa-cis-undecaprenyl diphospho-N-acetyl-alpha-D-muramoyl-L-alanyl-D-glutamyl-meso-2,6-diaminopimeloyl-D-alanyl-D-alanine + UMP. It functions in the pathway cell wall biogenesis; peptidoglycan biosynthesis. Its function is as follows. Catalyzes the initial step of the lipid cycle reactions in the biosynthesis of the cell wall peptidoglycan: transfers peptidoglycan precursor phospho-MurNAc-pentapeptide from UDP-MurNAc-pentapeptide onto the lipid carrier undecaprenyl phosphate, yielding undecaprenyl-pyrophosphoryl-MurNAc-pentapeptide, known as lipid I. This Deinococcus deserti (strain DSM 17065 / CIP 109153 / LMG 22923 / VCD115) protein is Phospho-N-acetylmuramoyl-pentapeptide-transferase.